The chain runs to 396 residues: Phosphoglycerate kinase (396 aa).

Substrate is bound by residues Asp-21 to Asn-23, Arg-37, His-60 to Arg-63, Arg-121, and Arg-154. ATP-binding positions include Lys-205, Gly-296, Glu-327, and Gly-353–Ser-356.

This sequence belongs to the phosphoglycerate kinase family. As to quaternary structure, monomer.

It is found in the cytoplasm. The enzyme catalyses (2R)-3-phosphoglycerate + ATP = (2R)-3-phospho-glyceroyl phosphate + ADP. It functions in the pathway carbohydrate degradation; glycolysis; pyruvate from D-glyceraldehyde 3-phosphate: step 2/5. The polypeptide is Phosphoglycerate kinase (Anaeromyxobacter dehalogenans (strain 2CP-C)).